We begin with the raw amino-acid sequence, 101 residues long: Protein S100-A4 (101 aa).

K7 is modified (N6-acetyllysine). 2 EF-hand domains span residues 12–47 (MVSTFHKYSGKEGDKFKLNRSELKELLMRELPSFLG) and 50–85 (TDEAAFQKLMSNLDSNRDNEVDFQEYCVFLSCVAMM). Ca(2+) contacts are provided by K28 and E33. An N6-acetyllysine modification is found at K35. D63, N65, D67, E69, and E74 together coordinate Ca(2+).

It belongs to the S-100 family. Homodimer. Interacts with PPFIBP1 in a calcium-dependent mode. Interacts with PGLYRP1; this complex acts as a chemoattractant that promotes lymphocyte movement. Interacts with MYH9; this interaction increases cell motility. Interacts with Annexin 2/ANXA2. Interacts with TP53; this interaction promotes TP53 degradation. Interacts with CCR5 and CXCR3. Interacts with FCGR3A; this interaction inhibits PKC-dependent phosphorylation of FCGR3A.

The protein resides in the secreted. The protein localises to the nucleus. It is found in the cytoplasm. Calcium-binding protein that plays a role in various cellular processes including motility, angiogenesis, cell differentiation, apoptosis, and autophagy. Increases cell motility and invasiveness by interacting with non-muscle myosin heavy chain (NMMHC) IIA/MYH9. Mechanistically, promotes filament depolymerization and increases the amount of soluble myosin-IIA, resulting in the formation of stable protrusions facilitating chemotaxis. Also modulates the pro-apoptotic function of TP53 by binding to its C-terminal transactivation domain within the nucleus and reducing its protein levels. Within the extracellular space, stimulates cytokine production including granulocyte colony-stimulating factor and CCL24 from T-lymphocytes. In addition, stimulates T-lymphocyte chemotaxis by acting as a chemoattractant complex with PGLYRP1 that promotes lymphocyte migration via CCR5 and CXCR3 receptors. The protein is Protein S100-A4 (S100A4) of Canis lupus familiaris (Dog).